A 556-amino-acid chain; its full sequence is Glutamine--tRNA ligase (556 aa).

The short motif at 34–44 is the 'HIGH' region element; the sequence is PEPNGYLHIGH. ATP is bound by residues 35-37 and 41-47; these read EPN and HIGHAKS. Residues aspartate 67 and tyrosine 212 each coordinate L-glutamine. ATP is bound by residues threonine 231, 261–262, and 269–271; these read RL and MSK. The short motif at 268 to 272 is the 'KMSKS' region element; it reads VMSKR.

The protein belongs to the class-I aminoacyl-tRNA synthetase family. In terms of assembly, monomer.

Its subcellular location is the cytoplasm. The enzyme catalyses tRNA(Gln) + L-glutamine + ATP = L-glutaminyl-tRNA(Gln) + AMP + diphosphate. This is Glutamine--tRNA ligase from Vibrio campbellii (strain ATCC BAA-1116).